The following is a 212-amino-acid chain: Adenylate kinase (212 aa).

G14–T19 serves as a coordination point for ATP. An NMP region spans residues S34–V63. Residues T35, R40, S61–V63, G89–R92, and Q96 each bind AMP. Positions Q126–D163 are LID. R127 contributes to the ATP binding site. Zn(2+) is bound by residues C130 and C133. S136 to Y137 provides a ligand contact to ATP. Zn(2+) contacts are provided by C150 and D153. R160 and R171 together coordinate AMP. Position 199 (Q199) interacts with ATP.

Belongs to the adenylate kinase family. As to quaternary structure, monomer.

It localises to the cytoplasm. It catalyses the reaction AMP + ATP = 2 ADP. Its pathway is purine metabolism; AMP biosynthesis via salvage pathway; AMP from ADP: step 1/1. Functionally, catalyzes the reversible transfer of the terminal phosphate group between ATP and AMP. Plays an important role in cellular energy homeostasis and in adenine nucleotide metabolism. In Mesomycoplasma hyopneumoniae (strain 232) (Mycoplasma hyopneumoniae), this protein is Adenylate kinase.